The primary structure comprises 156 residues: UPF0251 protein Sfum_2819 (156 aa).

Belongs to the UPF0251 family.

In Syntrophobacter fumaroxidans (strain DSM 10017 / MPOB), this protein is UPF0251 protein Sfum_2819.